The sequence spans 750 residues: Methylmalonyl-CoA mutase, mitochondrial (750 aa).

Residues 1–32 constitute a mitochondrion transit peptide; sequence MLRVKNQLFLLSPHYLKQVKESSGSRLIRQRF. Gln-50 lines the malonyl-CoA pocket. An N6-acetyllysine modification is found at Lys-89. Malonyl-CoA contacts are provided by residues 96–99 and 106–110; these read YPTM and TIRQY. Residue Lys-212 is modified to N6-acetyllysine. Residues 216-218, Arg-228, Lys-255, His-265, and 304-306 each bind malonyl-CoA; these read TIQ and RLS. N6-acetyllysine is present on Lys-335. Residue Lys-343 is modified to N6-succinyllysine. Position 481 is a phosphoserine (Ser-481). Position 595 is an N6-succinyllysine (Lys-595). Lys-602 carries the post-translational modification N6-acetyllysine. The B12-binding domain occupies 614–746; sequence RPRLLVAKMG…DDIEKCLEKK (133 aa). His-627 is an adenosylcob(III)alamin binding site.

The protein belongs to the methylmalonyl-CoA mutase family. Homodimer. Interacts (the apoenzyme form) with MMAA; the interaction is GTP dependent. It depends on adenosylcob(III)alamin as a cofactor.

It localises to the mitochondrion matrix. Its subcellular location is the mitochondrion. It is found in the cytoplasm. The enzyme catalyses (R)-methylmalonyl-CoA = succinyl-CoA. With respect to regulation, inhibited by itaconyl-CoA, a metabolite that inactivates the coenzyme B12 cofactor. Catalyzes the reversible isomerization of methylmalonyl-CoA (MMCoA) (generated from branched-chain amino acid metabolism and degradation of dietary odd chain fatty acids and cholesterol) to succinyl-CoA (3-carboxypropionyl-CoA), a key intermediate of the tricarboxylic acid cycle. This is Methylmalonyl-CoA mutase, mitochondrial (MMUT) from Macaca fascicularis (Crab-eating macaque).